We begin with the raw amino-acid sequence, 349 residues long: N-acetyltaurine hydrolase (349 aa).

Residues His26, His28, Glu169, His201, His230, and Asp298 each coordinate a divalent metal cation.

The protein belongs to the metallo-dependent hydrolases superfamily. Phosphotriesterase family. Requires a divalent metal cation as cofactor.

The protein localises to the cytoplasm. Its subcellular location is the cytosol. It catalyses the reaction N-acetyltaurine + H2O = taurine + acetate. The catalysed reaction is N-propanoyltaurine + H2O = propanoate + taurine. The enzyme catalyses N-acetyl-L-methionine + H2O = L-methionine + acetate. It carries out the reaction N-acetyl-L-isoleucine + H2O = L-isoleucine + acetate. It catalyses the reaction N-acetyl-L-leucine + H2O = L-leucine + acetate. The catalysed reaction is N-acetyl-L-valine + H2O = L-valine + acetate. Functionally, N-acetyltaurine hydrolase that regulates feeding by catalyzing the hydrolysis of N-acetyltaurine into taurine and acetate. N-acetyltaurine has anorexigenic and anti-obesity effects that are dependent on GFRAL receptor and GDF15. PTER also acts on other N-acetyl amino acids (Met, Ile, Leu, Val) and N-propionyltaurine, but at lower rates. The protein is N-acetyltaurine hydrolase of Homo sapiens (Human).